Consider the following 902-residue polypeptide: Leucine-rich repeat-containing G-protein coupled receptor 5 (902 aa).

An N-terminal signal peptide occupies residues 1 to 22 (MDTSKTSFFLFSVLCSLQLVGA). The Extracellular segment spans residues 23–558 (ARPGKQQRSC…HLFGSWLTRT (536 aa)). 2 disulfides stabilise this stretch: cysteine 32–cysteine 38 and cysteine 36–cysteine 49. Residues 32–61 (CPTPCECEQEGMLVRVDCSDRALTSLPRNL) form the LRRNT domain. LRR repeat units lie at residues 41–61 (EGML…PRNL), 62–85 (SIFT…VMHN), 86–109 (LHFL…AFAG), 111–133 (GSLK…ALHN), 134–157 (LRSL…SFNG), 159–181 (FSLR…ALES), 182–205 (LSAL…AFRN), 207–229 (SSLV…CFDG), 230–253 (LHSL…IKTL), 254–276 (KNLK…AFIG), 278–300 (PSLI…AFQH), 302–324 (PELR…LTGT), 325–347 (TSLE…VCTQ), 348–372 (LPNL…GCQR), 374–393 (QKID…TFQQ), 394–417 (LVGL…SFSS), and 418–441 (LPSL…GLHG). N-linked (GlcNAc...) asparagine glycans are attached at residues asparagine 60 and asparagine 74. The N-linked (GlcNAc...) asparagine glycan is linked to asparagine 205. Cysteine 345 and cysteine 370 are oxidised to a cystine. Residues cysteine 476 and cysteine 537 are joined by a disulfide bond. N-linked (GlcNAc...) asparagine glycosylation occurs at asparagine 496. A helical membrane pass occupies residues 559–579 (GVWLIVLLSFVCNALVIATVF). The Cytoplasmic segment spans residues 580-589 (RPLSYVPSIK). Residues 590–610 (LLIGLIAIMNTLMGLSSGVLA) form a helical membrane-spanning segment. One copy of the LRR 18 repeat lies at 598-619 (MNTLMGLSSGVLATVDALTFGN). The Extracellular segment spans residues 611–634 (TVDALTFGNFAQYGAWWESGVGCQ). Residues cysteine 633 and cysteine 708 are joined by a disulfide bond. A helical membrane pass occupies residues 635-655 (ITGFLSVFAAETSIFLLTVAA). Residues 656–678 (LERGFSIKCTTKFETKSSFINVK) lie on the Cytoplasmic side of the membrane. The chain crosses the membrane as a helical span at residues 679–699 (LSIVFCFLLSIVIAVSPLLSG). Residues 700–718 (STYGTSPLCFPLLFGDPSS) are Extracellular-facing. Residues 719–739 (MGFMVALVLLNSLCFLVMTIA) form a helical membrane-spanning segment. The Cytoplasmic portion of the chain corresponds to 740–763 (YTKLYCSLEKGELENIWDCSMVKH). The helical transmembrane segment at 764–784 (IALLLFTNCILYCPVAFLSFS) threads the bilayer. Residues 785–798 (SLLNLTFISPEVNK) are Extracellular-facing. N-linked (GlcNAc...) asparagine glycosylation is found at asparagine 788 and asparagine 797. The helical transmembrane segment at 799-819 (SILLLIIPLPACLNPLLYILF) threads the bilayer. The Cytoplasmic segment spans residues 820–902 (NPHFKEDIGS…LSAVAFVPCH (83 aa)).

It belongs to the G-protein coupled receptor 1 family.

It is found in the cell membrane. The protein resides in the golgi apparatus. It localises to the trans-Golgi network membrane. In terms of biological role, receptor for R-spondins that potentiates the canonical Wnt signaling pathway and acts as a stem cell marker of the intestinal epithelium and the hair follicle. Upon binding to R-spondins (RSPO1, RSPO2, RSPO3 or RSPO4), associates with phosphorylated LRP6 and frizzled receptors that are activated by extracellular Wnt receptors, triggering the canonical Wnt signaling pathway to increase expression of target genes. In contrast to classical G-protein coupled receptors, does not activate heterotrimeric G-proteins to transduce the signal. Involved in the development and/or maintenance of the adult intestinal stem cells during postembryonic development. The chain is Leucine-rich repeat-containing G-protein coupled receptor 5 (lgr5) from Xenopus tropicalis (Western clawed frog).